The sequence spans 819 residues: Ent-beyerene synthase KSL2, chloroplastic (819 aa).

Residues 1 to 58 (MLPCLFPAYGSVVACKPSAIDRSPFGLLSQPKQTNRTLIRRPKVTKAFMAIEAMRHCS) constitute a chloroplast transit peptide. A compositionally biased stretch (low complexity) spans 58-76 (SSSSSSEEGGAAATTAARS). The disordered stretch occupies residues 58–77 (SSSSSSEEGGAAATTAARSA). Mg(2+) contacts are provided by Asp567, Asp571, Asn711, Ser715, and Glu719. The DDXXD motif signature appears at 567 to 571 (DDFFD).

The protein belongs to the terpene synthase family. The cofactor is Mg(2+). As to expression, expressed in roots. Highly expressed in stems, flowers and panicle.

It is found in the plastid. The protein resides in the chloroplast. It catalyses the reaction ent-copalyl diphosphate = ent-beyerene + diphosphate. The enzyme catalyses ent-copalyl diphosphate = ent-kaur-16-ene + diphosphate. The protein operates within secondary metabolite biosynthesis; terpenoid biosynthesis. In terms of biological role, diterpene cyclase involved in jasmonic acid-dependent defense mechanisms in roots by mediating the biosynthesis of labdane-related diterpenoids (LRDs) natural products such as ent-beyerene, an antimicrobial compound. Catalyzes the cyclization of ent-CDP into ent-beyerene as a major and ent-kaurene as a minor product. May be involved in the catalysis of an early step of the gibberellin (GA) biosynthesis pathway. This Oryza sativa subsp. japonica (Rice) protein is Ent-beyerene synthase KSL2, chloroplastic.